Reading from the N-terminus, the 518-residue chain is Zinc finger protein 449 (518 aa).

Positions 30 to 112 (RQRFRQFQYR…SLIEDLQREL (83 aa)) constitute an SCAN box domain. Residues 292 to 304 (NPTLGETPENSNL) show a composition bias toward polar residues. Residues 292–325 (NPTLGETPENSNLEEPLNPKPHKKKSPGEKPHRC) are disordered. C2H2-type zinc fingers lie at residues 323–345 (HRCP…QRIH), 351–373 (HKCP…QRLH), 379–401 (YECT…QRTH), 407–429 (YKCL…LKTH), 435–457 (HRCH…QRTH), 463–485 (FKCN…LRIH), and 491–513 (YKCT…QVTH).

It belongs to the krueppel C2H2-type zinc-finger protein family.

It localises to the nucleus. Functionally, may be involved in transcriptional regulation. The sequence is that of Zinc finger protein 449 (ZNF449) from Homo sapiens (Human).